Consider the following 630-residue polypeptide: tRNA uridine 5-carboxymethylaminomethyl modification enzyme MnmG (630 aa).

13-18 (GGGHAG) lines the FAD pocket. Residue 273–287 (GPRYCPSIEDKVMRF) participates in NAD(+) binding.

It belongs to the MnmG family. Homodimer. Heterotetramer of two MnmE and two MnmG subunits. The cofactor is FAD.

The protein localises to the cytoplasm. Functionally, NAD-binding protein involved in the addition of a carboxymethylaminomethyl (cmnm) group at the wobble position (U34) of certain tRNAs, forming tRNA-cmnm(5)s(2)U34. The chain is tRNA uridine 5-carboxymethylaminomethyl modification enzyme MnmG from Actinobacillus pleuropneumoniae serotype 7 (strain AP76).